The primary structure comprises 255 residues: Major prion protein (255 aa).

The N-terminal stretch at methionine 1 to cysteine 24 is a signal peptide. An interaction with ADGRG6 region spans residues lysine 25–tyrosine 41. The interval lysine 25 to alanine 232 is interaction with GRB2, ERI3 and SYN1. The tract at residues proline 28 to threonine 110 is disordered. Tandem repeats lie at residues proline 54 to glutamine 62, proline 63 to glutamine 70, proline 71 to glutamine 78, proline 79 to glutamine 86, and proline 87 to glycine 94. Positions proline 54–glycine 94 are 5 X 8 AA tandem repeats of P-H-G-G-G-W-G-Q. Gly residues predominate over residues glutamine 55–glycine 97. Cu(2+) is bound by residues histidine 64, glycine 65, glycine 66, histidine 72, glycine 73, glycine 74, histidine 80, glycine 81, glycine 82, histidine 88, glycine 90, and glycine 91. Asparagine 174, asparagine 184, and asparagine 199 each carry an N-linked (GlcNAc...) asparagine glycan. A disulfide bond links cysteine 182 and cysteine 216. Alanine 232 is lipidated: GPI-anchor amidated alanine. The propeptide at serine 233–glycine 255 is removed in mature form.

Belongs to the prion family. As to quaternary structure, monomer and homodimer. Has a tendency to aggregate into amyloid fibrils containing a cross-beta spine, formed by a steric zipper of superposed beta-strands. Soluble oligomers may represent an intermediate stage on the path to fibril formation. Copper binding may promote oligomerization. Interacts with GRB2, APP, ERI3/PRNPIP and SYN1. Mislocalized cytosolically exposed PrP interacts with MGRN1; this interaction alters MGRN1 subcellular location and causes lysosomal enlargement. Interacts with APP. Interacts with KIAA1191. Interacts with ADGRG6.

It is found in the cell membrane. The protein resides in the golgi apparatus. Its primary physiological function is unclear. May play a role in neuronal development and synaptic plasticity. May be required for neuronal myelin sheath maintenance. May promote myelin homeostasis through acting as an agonist for ADGRG6 receptor. May play a role in iron uptake and iron homeostasis. Soluble oligomers are toxic to cultured neuroblastoma cells and induce apoptosis (in vitro). Association with GPC1 (via its heparan sulfate chains) targets PRNP to lipid rafts. Also provides Cu(2+) or Zn(2+) for the ascorbate-mediated GPC1 deaminase degradation of its heparan sulfate side chains. This Canis lupus familiaris (Dog) protein is Major prion protein (PRNP).